The chain runs to 441 residues: tRNA modification GTPase MnmE (441 aa).

Positions 23, 81, and 121 each coordinate (6S)-5-formyl-5,6,7,8-tetrahydrofolate. Residues 219 to 366 form the TrmE-type G domain; sequence GFTVVLAGAP…LLDAIQAAAE (148 aa). Residues 229 to 234, 248 to 254, and 273 to 276 contribute to the GTP site; these read NSGKST, SDSPGTT, and DTAG. Residues serine 233 and threonine 254 each contribute to the Mg(2+) site. Lysine 441 serves as a coordination point for (6S)-5-formyl-5,6,7,8-tetrahydrofolate.

It belongs to the TRAFAC class TrmE-Era-EngA-EngB-Septin-like GTPase superfamily. TrmE GTPase family. As to quaternary structure, homodimer. Heterotetramer of two MnmE and two MnmG subunits. Requires K(+) as cofactor.

Its subcellular location is the cytoplasm. Its function is as follows. Exhibits a very high intrinsic GTPase hydrolysis rate. Involved in the addition of a carboxymethylaminomethyl (cmnm) group at the wobble position (U34) of certain tRNAs, forming tRNA-cmnm(5)s(2)U34. In Methylobacterium radiotolerans (strain ATCC 27329 / DSM 1819 / JCM 2831 / NBRC 15690 / NCIMB 10815 / 0-1), this protein is tRNA modification GTPase MnmE.